The primary structure comprises 177 residues: uncharacterized protein (177 aa).

Residues 10–177 (LILRQITDQD…NVYSIVKPRE (168 aa)) enclose the N-acetyltransferase domain.

It belongs to the acetyltransferase family.

This is an uncharacterized protein from Bacillus subtilis (strain 168).